The sequence spans 418 residues: UDP-N-acetylglucosamine 1-carboxyvinyltransferase 2 (418 aa).

A phosphoenolpyruvate-binding site is contributed by 22–23 (KN). A UDP-N-acetyl-alpha-D-glucosamine-binding site is contributed by Arg93. Cys117 serves as the catalytic Proton donor. Position 117 is a 2-(S-cysteinyl)pyruvic acid O-phosphothioketal (Cys117). UDP-N-acetyl-alpha-D-glucosamine-binding positions include 122-126 (RPIDQ), Asp305, and Ile327.

The protein belongs to the EPSP synthase family. MurA subfamily.

The protein resides in the cytoplasm. It catalyses the reaction phosphoenolpyruvate + UDP-N-acetyl-alpha-D-glucosamine = UDP-N-acetyl-3-O-(1-carboxyvinyl)-alpha-D-glucosamine + phosphate. Its pathway is cell wall biogenesis; peptidoglycan biosynthesis. Functionally, cell wall formation. Adds enolpyruvyl to UDP-N-acetylglucosamine. The polypeptide is UDP-N-acetylglucosamine 1-carboxyvinyltransferase 2 (Clostridium acetobutylicum (strain ATCC 824 / DSM 792 / JCM 1419 / IAM 19013 / LMG 5710 / NBRC 13948 / NRRL B-527 / VKM B-1787 / 2291 / W)).